A 108-amino-acid polypeptide reads, in one-letter code: Cytochrome c6 (108 aa).

A signal peptide spans 1 to 23 (MRLLFAFFIICHIFTNNVQLTFA). Heme c contacts are provided by C37, C40, H41, and M81.

It belongs to the cytochrome c family. PetJ subfamily. Monomer. In terms of processing, binds 1 heme c group covalently per subunit.

The protein localises to the plastid. It is found in the chloroplast thylakoid lumen. Functionally, functions as an electron carrier between membrane-bound cytochrome b6-f and photosystem I in oxygenic photosynthesis. The polypeptide is Cytochrome c6 (Gracilaria tenuistipitata var. liui (Red alga)).